Reading from the N-terminus, the 362-residue chain is 3-dehydroquinate synthase (362 aa).

NAD(+)-binding positions include 71 to 76, 105 to 109, 129 to 130, K142, K151, and 169 to 172; these read DGEQYK, GVVGD, TT, and CLKT. Positions 184, 247, and 264 each coordinate Zn(2+).

The protein belongs to the sugar phosphate cyclases superfamily. Dehydroquinate synthase family. Co(2+) serves as cofactor. Requires Zn(2+) as cofactor. The cofactor is NAD(+).

The protein localises to the cytoplasm. The catalysed reaction is 7-phospho-2-dehydro-3-deoxy-D-arabino-heptonate = 3-dehydroquinate + phosphate. It functions in the pathway metabolic intermediate biosynthesis; chorismate biosynthesis; chorismate from D-erythrose 4-phosphate and phosphoenolpyruvate: step 2/7. Functionally, catalyzes the conversion of 3-deoxy-D-arabino-heptulosonate 7-phosphate (DAHP) to dehydroquinate (DHQ). This Escherichia coli O6:K15:H31 (strain 536 / UPEC) protein is 3-dehydroquinate synthase.